The following is a 390-amino-acid chain: Homeobox protein Hox-B2a (390 aa).

Disordered stretches follow at residues Ser40–Asn73, Thr81–Leu100, Lys108–Val155, and Met211–Asp338. The span at Pro52 to Asn73 shows a compositional bias: polar residues. An Antp-type hexapeptide motif is present at residues Glu103 to Lys108. A compositionally biased stretch (low complexity) spans Lys118–Ser135. A DNA-binding region (homeobox) is located at residues Ser158 to Thr217. The span at Ser244–Glu262 shows a compositional bias: low complexity. Over residues Thr263–Glu290 the composition is skewed to polar residues.

The protein belongs to the Antp homeobox family. Proboscipedia subfamily.

Its subcellular location is the nucleus. Its function is as follows. Sequence-specific transcription factor which is part of a developmental regulatory system that provides cells with specific positional identities on the anterior-posterior axis. Plays an important role in the patterning of hindbrain and pharyngeal arches. This is Homeobox protein Hox-B2a (hoxb2a) from Danio rerio (Zebrafish).